Here is a 245-residue protein sequence, read N- to C-terminus: Carboxymethylenebutenolidase homolog (245 aa).

N-acetylalanine is present on A2. Catalysis depends on residues C132, D179, and H212. S223 carries the phosphoserine modification.

It belongs to the dienelactone hydrolase family.

It localises to the cytoplasm. The protein resides in the cytosol. In terms of biological role, cysteine hydrolase. In Mus musculus (Mouse), this protein is Carboxymethylenebutenolidase homolog (Cmbl).